The chain runs to 155 residues: MRKLKPQKRQVLADPVYNSRLVTKLINAIMYDGKKGLAQSIIYSAFEIVEQKTGKPALEVFNKAIDNVMPIIELKVRRVGGSNFQVPTEVTPERRQTLGLRWITLYARLRHEHTMIEKLAHEIIDASNNVGAAIKKKEDTHKMAEANKAFAHLRW.

It belongs to the universal ribosomal protein uS7 family. As to quaternary structure, part of the 30S ribosomal subunit. Contacts proteins S9 and S11.

Its function is as follows. One of the primary rRNA binding proteins, it binds directly to 16S rRNA where it nucleates assembly of the head domain of the 30S subunit. Is located at the subunit interface close to the decoding center, probably blocks exit of the E-site tRNA. The polypeptide is Small ribosomal subunit protein uS7 (Ureaplasma parvum serovar 3 (strain ATCC 27815 / 27 / NCTC 11736)).